A 95-amino-acid polypeptide reads, in one-letter code: Orphan antitoxin ParD2 (95 aa).

In terms of biological role, antitoxin component of a non-functional type II toxin-antitoxin (TA system). Does not neutralize the effect of any of the RelE or ParE toxins. The sequence is that of Orphan antitoxin ParD2 (parD2) from Caulobacter vibrioides (strain ATCC 19089 / CIP 103742 / CB 15) (Caulobacter crescentus).